Consider the following 287-residue polypeptide: 4-hydroxybenzoate octaprenyltransferase (287 aa).

7 consecutive transmembrane segments (helical) span residues 30–50, 92–112, 133–153, 158–178, 207–227, 232–252, and 266–286; these read ALWI…FALG, IAIA…LNGL, FFAI…PMAF, DTVP…SVAY, VLAI…LGAA, WPYW…YTLI, and HNNW…ALAV.

This sequence belongs to the UbiA prenyltransferase family. It depends on Mg(2+) as a cofactor.

The protein resides in the cell inner membrane. It carries out the reaction all-trans-octaprenyl diphosphate + 4-hydroxybenzoate = 4-hydroxy-3-(all-trans-octaprenyl)benzoate + diphosphate. Its pathway is cofactor biosynthesis; ubiquinone biosynthesis. Functionally, catalyzes the prenylation of para-hydroxybenzoate (PHB) with an all-trans polyprenyl group. Mediates the second step in the final reaction sequence of ubiquinone-8 (UQ-8) biosynthesis, which is the condensation of the polyisoprenoid side chain with PHB, generating the first membrane-bound Q intermediate 3-octaprenyl-4-hydroxybenzoate. The polypeptide is 4-hydroxybenzoate octaprenyltransferase (Burkholderia pseudomallei (strain 1106a)).